The chain runs to 465 residues: Adenosylhomocysteinase (465 aa).

Substrate contacts are provided by Thr56, Asp131, and Glu191. Residue 192 to 194 (TTT) coordinates NAD(+). Residues Lys221 and Asp225 each coordinate substrate. Residues Asn226, 255-260 (GYGDVG), Glu278, Asn313, 334-336 (IGH), and Asn379 each bind NAD(+).

Belongs to the adenosylhomocysteinase family. The cofactor is NAD(+).

It is found in the cytoplasm. The catalysed reaction is S-adenosyl-L-homocysteine + H2O = L-homocysteine + adenosine. It participates in amino-acid biosynthesis; L-homocysteine biosynthesis; L-homocysteine from S-adenosyl-L-homocysteine: step 1/1. In terms of biological role, may play a key role in the regulation of the intracellular concentration of adenosylhomocysteine. The chain is Adenosylhomocysteinase from Bartonella henselae (strain ATCC 49882 / DSM 28221 / CCUG 30454 / Houston 1) (Rochalimaea henselae).